The primary structure comprises 271 residues: ATP synthase subunit a (271 aa).

5 helical membrane-spanning segments follow: residues 40-60, 100-120, 146-166, 220-240, and 242-262; these read TINI…LVLF, LIAP…LMDL, DVNV…FYSI, LIFI…LNVP, and AIFH…LTIV.

It belongs to the ATPase A chain family. As to quaternary structure, F-type ATPases have 2 components, CF(1) - the catalytic core - and CF(0) - the membrane proton channel. CF(1) has five subunits: alpha(3), beta(3), gamma(1), delta(1), epsilon(1). CF(0) has three main subunits: a(1), b(2) and c(9-12). The alpha and beta chains form an alternating ring which encloses part of the gamma chain. CF(1) is attached to CF(0) by a central stalk formed by the gamma and epsilon chains, while a peripheral stalk is formed by the delta and b chains.

The protein resides in the cell inner membrane. In terms of biological role, key component of the proton channel; it plays a direct role in the translocation of protons across the membrane. This chain is ATP synthase subunit a, found in Shigella dysenteriae serotype 1 (strain Sd197).